Here is a 311-residue protein sequence, read N- to C-terminus: Dehydrogenase/reductase SDR family member 7C (311 aa).

The signal sequence occupies residues 1–18; sequence MGIMAVLMLPLLLLGVSG. S47, L49, Y191, K195, and S226 together coordinate NAD(+). Y191 functions as the Proton acceptor in the catalytic mechanism.

This sequence belongs to the short-chain dehydrogenases/reductases (SDR) family. In terms of tissue distribution, expressed in skeletal muscle, cardiac muscle and skin.

Its subcellular location is the sarcoplasmic reticulum membrane. It catalyses the reaction all-trans-retinol + NAD(+) = all-trans-retinal + NADH + H(+). Its function is as follows. NADH-dependent oxidoreductase which catalyzes the oxidation of all-trans-retinol to all-trans-retinal. Plays a role in the regulation of cardiac and skeletal muscle metabolic functions. Maintains Ca(2+) intracellular homeostasis by repressing Ca(2+) release from the sarcoplasmic reticulum (SR) in myotubes, possibly through local alternations in NAD/NADH or retinol/retinal. Also plays a role in Ca(2+) homeostasis by controlling Ca(2+) overload in the cytosol and the SR in myotubes. Involved in glucose uptake into skeletal muscles and muscle performance by activating PI3K and mTORC2-mediated AKT1 phosphorylation signaling pathways, possibly through the action of its downstream catalytic product all-trans-retinoic acid. This Rattus norvegicus (Rat) protein is Dehydrogenase/reductase SDR family member 7C.